A 177-amino-acid chain; its full sequence is MFRAGSSKRFLRNTLIAISWVPVLLTINNNVVHIAQVKGTSMQPTLNPQTETLATDWVLLWKFGVKNPSNLSRDDIILFKAPTNPRKVYCKRVKGLPFDTIDTKFPYPKPQVNLPRGHIWVEGDNYFHSIDSNTFGPISSGLVIGKAITIVWPPSRWGTDLKLSTGRDCISKRAILE.

Active-site residues include serine 41 and lysine 91. Residues 134–152 (TFGPISSGLVIGKAITIVW) form a helical membrane-spanning segment.

The protein belongs to the peptidase S26 family. IMP2 subfamily. In terms of assembly, component of the mitochondrial inner membrane peptidase (IMP) complex which at least consists of IMP1, IMP2 and SOM1. Post-translationally, the N-terminus is blocked.

Its subcellular location is the mitochondrion inner membrane. Functionally, catalytic component of the mitochondrial inner membrane peptidase (IMP) complex. IMP catalyzes the removal of signal peptides required for the targeting of proteins from the mitochondrial matrix, across the inner membrane, into the inter-membrane space. The two catalytic IMP subunits seem to have non-overlapping substrate specificities. IMP2 substrates include nuclear encoded CYB2, mitochondrially encoded COX2 and cytochrome c1. Required for the stability of IMP1. The sequence is that of Mitochondrial inner membrane protease subunit 2 (IMP2) from Saccharomyces cerevisiae (strain ATCC 204508 / S288c) (Baker's yeast).